A 287-amino-acid chain; its full sequence is uncharacterized protein (287 aa).

The next 7 membrane-spanning stretches (helical) occupy residues 27 to 47 (LTFS…FGVQ), 66 to 86 (LGTI…VTAF), 97 to 117 (WFWG…GVLL), 135 to 155 (IVFA…LSAL), 171 to 191 (IFIW…VLNF), 205 to 225 (LFPG…VYFV), and 254 to 274 (SALF…YFIL).

It is found in the cell membrane. This is an uncharacterized protein from Mycoplasma pneumoniae (strain ATCC 29342 / M129 / Subtype 1) (Mycoplasmoides pneumoniae).